The chain runs to 267 residues: Exodeoxyribonuclease III (267 aa).

Mg(2+) is bound at residue E34. Y109 is a catalytic residue. Residues D151, N153, and D258 each contribute to the Mg(2+) site. Residue D151 is the Proton donor/acceptor of the active site.

Belongs to the DNA repair enzymes AP/ExoA family. As to quaternary structure, monomer. The cofactor is Mg(2+). Requires Mn(2+) as cofactor.

It carries out the reaction Exonucleolytic cleavage in the 3'- to 5'-direction to yield nucleoside 5'-phosphates.. Functionally, major apurinic-apyrimidinic endonuclease of E.coli. It removes the damaged DNA at cytosines and guanines by cleaving on the 3'-side of the AP site by a beta-elimination reaction. The protein is Exodeoxyribonuclease III (xthA) of Haemophilus influenzae (strain ATCC 51907 / DSM 11121 / KW20 / Rd).